An 86-amino-acid chain; its full sequence is RNA-binding protein Hfq (86 aa).

A Sm domain is found at 9 to 68 (DPYLNVLRKERIPVSIYLVNGIKLQGQVESFDQFVVLLKNTVSQMVYKHAISTVVPSRPV).

It belongs to the Hfq family. As to quaternary structure, homohexamer.

Its function is as follows. RNA chaperone that binds small regulatory RNA (sRNAs) and mRNAs to facilitate mRNA translational regulation in response to envelope stress, environmental stress and changes in metabolite concentrations. Also binds with high specificity to tRNAs. The protein is RNA-binding protein Hfq of Saccharophagus degradans (strain 2-40 / ATCC 43961 / DSM 17024).